The primary structure comprises 379 residues: Homoserine O-succinyltransferase (379 aa).

Residues Asn-51–Leu-360 enclose the AB hydrolase-1 domain. Ser-157 functions as the Nucleophile in the catalytic mechanism. Arg-227 is a binding site for substrate. Catalysis depends on residues Asp-323 and His-356. Residue Asp-357 participates in substrate binding.

The protein belongs to the AB hydrolase superfamily. MetX family. In terms of assembly, homodimer.

The protein resides in the cytoplasm. It carries out the reaction L-homoserine + succinyl-CoA = O-succinyl-L-homoserine + CoA. It participates in amino-acid biosynthesis; L-methionine biosynthesis via de novo pathway; O-succinyl-L-homoserine from L-homoserine: step 1/1. Its function is as follows. Transfers a succinyl group from succinyl-CoA to L-homoserine, forming succinyl-L-homoserine. The sequence is that of Homoserine O-succinyltransferase from Stutzerimonas stutzeri (strain A1501) (Pseudomonas stutzeri).